Reading from the N-terminus, the 249-residue chain is Uridylate kinase (249 aa).

An ATP-binding site is contributed by 13-16 (KLSG). Glycine 55 contacts UMP. ATP contacts are provided by glycine 56 and arginine 60. UMP contacts are provided by residues aspartate 75 and 136–143 (IGNPFFTT). Residues threonine 163, phenylalanine 169, and aspartate 172 each contribute to the ATP site.

Belongs to the UMP kinase family. Homohexamer.

Its subcellular location is the cytoplasm. The enzyme catalyses UMP + ATP = UDP + ADP. The protein operates within pyrimidine metabolism; CTP biosynthesis via de novo pathway; UDP from UMP (UMPK route): step 1/1. With respect to regulation, inhibited by UTP. In terms of biological role, catalyzes the reversible phosphorylation of UMP to UDP. This is Uridylate kinase from Baumannia cicadellinicola subsp. Homalodisca coagulata.